The primary structure comprises 347 residues: Phosphoribosylformylglycinamidine cyclo-ligase (347 aa).

Belongs to the AIR synthase family.

It localises to the cytoplasm. It catalyses the reaction 2-formamido-N(1)-(5-O-phospho-beta-D-ribosyl)acetamidine + ATP = 5-amino-1-(5-phospho-beta-D-ribosyl)imidazole + ADP + phosphate + H(+). The protein operates within purine metabolism; IMP biosynthesis via de novo pathway; 5-amino-1-(5-phospho-D-ribosyl)imidazole from N(2)-formyl-N(1)-(5-phospho-D-ribosyl)glycinamide: step 2/2. This Bacillus cytotoxicus (strain DSM 22905 / CIP 110041 / 391-98 / NVH 391-98) protein is Phosphoribosylformylglycinamidine cyclo-ligase.